The following is a 230-amino-acid chain: Claudin-2 (230 aa).

The Cytoplasmic segment spans residues 1–7 (MASLGLQ). A helical membrane pass occupies residues 8 to 28 (LVGYILGLLGLLGTLVAMLLP). The Extracellular segment spans residues 29–81 (SWRTSSYVGTSIVTAVGFSKGLWMECATHSTGITQCDIYSTLLGLPADIQAAQ). A disulfide bond links Cys-54 and Cys-64. The helical transmembrane segment at 82-102 (AMMVTSSAISSLACIVSVVGM) threads the bilayer. At 103–116 (RCTVFCQDSRAKDR) the chain is on the cytoplasmic side. The helical transmembrane segment at 117–137 (LAVVGGVFFIIGGLLGFIPVA) threads the bilayer. The Extracellular portion of the chain corresponds to 138-162 (WNLHGILRDFYSPLVPDSMKFEIGE). The helical transmembrane segment at 163-183 (ALYLGIISSLFSLVAGIILCF) threads the bilayer. The Cytoplasmic portion of the chain corresponds to 184–230 (SCPLQGNRSDYYDSYQAQPLATRGSPRPGQPPKAKSEFNSYSLTGYV). The interval 205 to 230 (TRGSPRPGQPPKAKSEFNSYSLTGYV) is disordered. A Glycyl lysine isopeptide (Lys-Gly) (interchain with G-Cter in SUMO) cross-link involves residue Lys-218. Residues Ser-219 and Ser-223 each carry the phosphoserine modification. Residues 220 to 230 (EFNSYSLTGYV) are compositionally biased toward polar residues. The segment at 229–230 (YV) is interaction with TJP1, TJP2 and TJP3.

The protein belongs to the claudin family. In terms of assembly, can form homo- and heteropolymers with other claudins to mediate paracellular barrier and channel functions of tight junctions in response to physiological stimuli. Homopolymers interact with CLDN3, but not CLDN1, homopolymers. Directly interacts with TJP1/ZO-1, TJP2/ZO-2 and TJP3/ZO-3. In terms of processing, the disulfide bond is necessary for pore formation, but is not required for correct protein trafficking.

The protein resides in the cell junction. It localises to the tight junction. Its subcellular location is the cell membrane. The enzyme catalyses Na(+)(in) = Na(+)(out). The catalysed reaction is K(+)(in) = K(+)(out). It carries out the reaction Rb(+)(in) = Rb(+)(out). It catalyses the reaction Li(+)(in) = Li(+)(out). The enzyme catalyses Cs(+)(in) = Cs(+)(out). The catalysed reaction is Ca(2+)(in) = Ca(2+)(out). It carries out the reaction methylamine(out) = methylamine(in). It catalyses the reaction choline(out) = choline(in). The enzyme catalyses H2O(in) = H2O(out). In terms of biological role, forms paracellular channels: polymerizes in tight junction strands with cation- and water-selective channels through the strands, conveying epithelial permeability in a process known as paracellular tight junction permeability. In intestinal epithelium, allows for sodium and water fluxes from the peritoneal side to the lumen of the intestine to regulate nutrient absorption and clear enteric pathogens as part of mucosal immune response. In kidney, allows passive sodium and calcium reabsorption across proximal tubules from the lumen back to the bloodstream. In the hepatobiliary tract, allows paracellular water and cation fluxes in the hepatic perivenous areas and biliary epithelium to generate bile flow and maintain osmotic gradients. In Canis lupus familiaris (Dog), this protein is Claudin-2 (CLDN2).